The sequence spans 136 residues: MQTTGALLISPALIRSCTRGLIRPVSASFLSRPEIQSVQPSYSSGPLQVARREFQTSVVSRDIDTAAKFIGAGAATVGVAGSGAGIGTVFGSLIIGYARNPSLKQQLFSYAILGFALSEAMGLFCLMVAFLILFAM.

Residues 1–61 (MQTTGALLIS…REFQTSVVSR (61 aa)) constitute a mitochondrion transit peptide. Residues 77–97 (VGVAGSGAGIGTVFGSLIIGY) form a helical membrane-spanning segment. Lysine 104 is subject to N6,N6,N6-trimethyllysine. Residues 112–132 (ILGFALSEAMGLFCLMVAFLI) form a helical membrane-spanning segment.

The protein belongs to the ATPase C chain family. As to quaternary structure, homooctamer; the c-ring consists of eight c subunits forming a circle, and each subunit adopts a hairpin shape. Component of the ATP synthase complex composed at least of ATP5F1A/subunit alpha, ATP5F1B/subunit beta, ATP5MC1/subunit c (homooctomer), MT-ATP6/subunit a, MT-ATP8/subunit 8, ATP5ME/subunit e, ATP5MF/subunit f, ATP5MG/subunit g, ATP5MK/subunit k, ATP5MJ/subunit j, ATP5F1C/subunit gamma, ATP5F1D/subunit delta, ATP5F1E/subunit epsilon, ATP5PF/subunit F6, ATP5PB/subunit b, ATP5PD/subunit d, ATP5PO/subunit OSCP. ATP synthase complex consists of a soluble F(1) head domain (subunits alpha(3) and beta(3)) - the catalytic core - and a membrane F(0) domain - the membrane proton channel (subunits c, a, 8, e, f, g, k and j). These two domains are linked by a central stalk (subunits gamma, delta, and epsilon) rotating inside the F1 region and a stationary peripheral stalk (subunits F6, b, d, and OSCP). Interacts with TMEM70 (homooligomer form); this interaction facilitates the oligomer formation of subunit c/ATP5MC1 (c-ring) and the c-ring membrane insertion and also protects ATP5MC1 against intramitochondrial proteolysis. In terms of processing, trimethylated by ATPSCKMT at Lys-104. Methylation is required for proper incorporation of the C subunit into the ATP synthase complex and mitochondrial respiration.

The protein resides in the mitochondrion membrane. It catalyses the reaction H(+)(in) = H(+)(out). Functionally, subunit c, of the mitochondrial membrane ATP synthase complex (F(1)F(0) ATP synthase or Complex V) that produces ATP from ADP in the presence of a proton gradient across the membrane which is generated by electron transport complexes of the respiratory chain. ATP synthase complex consist of a soluble F(1) head domain - the catalytic core - and a membrane F(1) domain - the membrane proton channel. These two domains are linked by a central stalk rotating inside the F(1) region and a stationary peripheral stalk. During catalysis, ATP synthesis in the catalytic domain of F(1) is coupled via a rotary mechanism of the central stalk subunits to proton translocation. With the subunit a (MT-ATP6), forms the proton-conducting channel in the F(0) domain, that contains two crucial half-channels (inlet and outlet) that facilitate proton movement from the mitochondrial intermembrane space (IMS) into the matrix. Protons are taken up via the inlet half-channel and released through the outlet half-channel, following a Grotthuss mechanism. The chain is ATP synthase F(0) complex subunit C1, mitochondrial from Bos taurus (Bovine).